The primary structure comprises 1528 residues: Mitogen-activated protein kinase kinae kinase MCK1 (1528 aa).

Over residues 1–11 the composition is skewed to low complexity; the sequence is MYPGSSQSRPY. Disordered regions lie at residues 1-84, 109-208, 303-418, 449-481, 607-652, 695-731, 746-786, 811-929, 943-1012, and 1086-1191; these read MYPG…PAPR, ATAP…VPGI, VHAR…NNVR, INGR…KLPF, VKPP…EARL, GKPV…APSA, VQGS…SQPM, SANN…SDDG, KKAK…EDGK, and ATPL…ALLR. The segment covering 12-21 has biased composition (pro residues); the sequence is QVPPPPPMSP. A compositionally biased stretch (low complexity) spans 22–31; that stretch reads PLSQMHQQMS. Residues 53 to 64 are compositionally biased toward pro residues; sequence APPPPPPGPPPA. Residues 157 to 173 show a composition bias toward low complexity; that stretch reads SSQTWQTTSSSSTNTAS. Composition is skewed to polar residues over residues 174 to 183, 191 to 205, and 318 to 327; these read VNDNVQSNAP, NNSA…SSNV, and HGRQGSINSR. The segment covering 328-337 has biased composition (basic and acidic residues); sequence GNDKGTHDGS. Positions 338-363 are enriched in polar residues; that stretch reads DSPNTPSSQSRSTTIPTFPDGSSFSN. Over residues 396–408 the composition is skewed to low complexity; sequence SSTPKSSTLSVSP. The segment covering 409–418 has biased composition (polar residues); it reads HSSRFGNNVR. 2 stretches are compositionally biased toward polar residues: residues 613-622 and 630-641; these read SQQSTWSAGD and GTSSSMSRQQNT. Composition is skewed to basic and acidic residues over residues 642–652 and 698–714; these read LKDDQSEEARL and VDFD…KNTD. The segment covering 846–860 has biased composition (polar residues); sequence RSQTAGDLSPISQMP. The segment covering 917–928 has biased composition (acidic residues); it reads QSDDDSGDDSDD. Polar residues predominate over residues 977-986; the sequence is VSFNSPQSAR. Residues 1001–1012 show a composition bias toward basic and acidic residues; that stretch reads PKSDMWDSEDGK. Residues 1086–1111 are compositionally biased toward polar residues; it reads ATPLNSLPPSRVQSMYNESDTLGSDE. Residues 1142–1152 show a composition bias toward basic and acidic residues; it reads SIREKARGAHE. Residues 1158 to 1188 are compositionally biased toward polar residues; it reads TQTSMAAPQGLSRSGGTPATETQPTQNNSSA. The Protein kinase domain maps to 1238–1507; that stretch reads WFKGQLIGKG…NKLLSQHPFC (270 aa). ATP-binding positions include 1244 to 1252 and lysine 1267; that span reads IGKGTYGRV.

This sequence belongs to the protein kinase superfamily. STE Ser/Thr protein kinase family. MAP kinase kinase kinase subfamily. In terms of assembly, interacts with the adapter protein MST50 and MIP11.

The enzyme catalyses L-seryl-[protein] + ATP = O-phospho-L-seryl-[protein] + ADP + H(+). It catalyses the reaction L-threonyl-[protein] + ATP = O-phospho-L-threonyl-[protein] + ADP + H(+). Functionally, mitogen-activated protein kinase kinase kinase; part of the MCK1-MKK2-MPS1 MAP kinase (MAPK) signal transduction cascade that is essential for appressorium formation, penetration and invasive growth. Beside its role in pathogenesis, the MPS1 cascade is active in conidiation and cellular stress responses. Targets downstream of the the MPS1-MAPK pathway include transcription factors MIG1 and SWI6, as well as GSK1 and MPG1. The protein is Mitogen-activated protein kinase kinae kinase MCK1 of Pyricularia oryzae (strain 70-15 / ATCC MYA-4617 / FGSC 8958) (Rice blast fungus).